The primary structure comprises 219 residues: Probable GTP-binding protein EngB (219 aa).

The 173-residue stretch at 40–212 (LLPEIAFIGK…KASLAKCIIK (173 aa)) folds into the EngB-type G domain. GTP-binding positions include 48–55 (GKSNVGKS), 75–79 (GRTGQ), 93–96 (DLPG), 160–163 (TKFD), and 191–193 (VSS). Ser-55 and Thr-77 together coordinate Mg(2+).

Belongs to the TRAFAC class TrmE-Era-EngA-EngB-Septin-like GTPase superfamily. EngB GTPase family. Mg(2+) is required as a cofactor.

Necessary for normal cell division and for the maintenance of normal septation. The polypeptide is Probable GTP-binding protein EngB (Rickettsia canadensis (strain McKiel)).